Consider the following 906-residue polypeptide: uncharacterized protein (906 aa).

Disordered regions lie at residues Lys231–Ile322 and Ala865–Glu906. A compositionally biased stretch (low complexity) spans Thr236–Thr250. Positions Thr264 to Ala281 are enriched in pro residues. Residues Ser302–Glu314 are compositionally biased toward polar residues. Positions Ala867 to Glu906 are enriched in acidic residues.

This is an uncharacterized protein from Dictyostelium sp. (strain GA11) (Slime mold).